We begin with the raw amino-acid sequence, 345 residues long: MAKAGEKSGGGGKRGLKRKAPAEEPQETAVASDGTAESGVQSAKAAAFPPGFSISEIKNKQRRHLMFTRWKQQQRKEKLAAKKKLKREREALGDKAPPKPVPKTIDNQRVYDETTVDPNDEEVAYDEATDEFASYFNRQTSPKILITTSDRPHGRTVRLCEQLSTVIPDSHVYYRRGLALKKIIPQCIARDFTDLIVINEDRKTPNGLILSHLPNGPTAHFKMSSVRLRKEIKRRGKDPTEHVPEIILNNFTTRLGHSIGRMFASLFPHNPQFIGRQVATFHNQRDYIFFRFHRYIFKSEKKVGIQELGPRFTLKLRSLQKGTFDSKYGEYEWVHKVCAYCSKAI.

Disordered regions lie at residues 1–57 (MAKA…ISEI) and 70–105 (WKQQQRKEKLAAKKKLKREREALGDKAPPKPVPKTI). Residues 87–97 (REREALGDKAP) show a composition bias toward basic and acidic residues. Positions 142–325 (PKILITTSDR…LRSLQKGTFD (184 aa)) constitute a Brix domain. The segment at 303–320 (VGIQELGPRFTLKLRSLQ) is RNA-binding.

The protein resides in the nucleus. The protein localises to the nucleolus. In terms of biological role, may be required for ribosome biogenesis. The polypeptide is Ribosome production factor 1 (Rpf1) (Rattus norvegicus (Rat)).